The primary structure comprises 277 residues: Large ribosomal subunit protein uL2 (277 aa).

Residues 225 to 277 (MNPVDHPHGGGEGKTSGGRNSVTPWGVPTKGKKTRKRGKHSDKYIKVSSVRKR) form a disordered region. Over residues 254–264 (KGKKTRKRGKH) the composition is skewed to basic residues.

This sequence belongs to the universal ribosomal protein uL2 family. In terms of assembly, part of the 50S ribosomal subunit. Forms a bridge to the 30S subunit in the 70S ribosome.

Its function is as follows. One of the primary rRNA binding proteins. Required for association of the 30S and 50S subunits to form the 70S ribosome, for tRNA binding and peptide bond formation. It has been suggested to have peptidyltransferase activity; this is somewhat controversial. Makes several contacts with the 16S rRNA in the 70S ribosome. This Anaplasma marginale (strain Florida) protein is Large ribosomal subunit protein uL2.